The sequence spans 145 residues: MEEVTVYKISDRAKLPYKQTSYSAGYDLYSAYDYVIEPMNKELIKTDIILKIPNGYYGRIAPRSGLAYNYFIDVGAGVIDSDYRGNVGVLLFNFGSTQFNVCKGDRIAQIIFEKIAYPKIIEVTTLEEINITDRGNSGFGSTGLK.

This sequence belongs to the dUTPase family. The cofactor is Mg(2+).

The enzyme catalyses dUTP + H2O = dUMP + diphosphate + H(+). In terms of biological role, this enzyme is involved in nucleotide metabolism: it produces dUMP, the immediate precursor of thymidine nucleotides and it decreases the intracellular concentration of dUTP so that uracil cannot be incorporated into DNA. This is Deoxyuridine 5'-triphosphate nucleotidohydrolase (DUT) from Fowlpox virus (strain NVSL) (FPV).